A 387-amino-acid polypeptide reads, in one-letter code: Protein MGF 360-4L (387 aa).

This sequence belongs to the asfivirus MGF 360 family.

Plays a role in virus cell tropism, and may be required for efficient virus replication in macrophages. This Ornithodoros (relapsing fever ticks) protein is Protein MGF 360-4L.